The chain runs to 62 residues: uncharacterized protein (62 aa).

The tract at residues 1-62 is disordered; that stretch reads MTSTQNLKDK…PPKKSLSQLP (62 aa). The span at 7-29 shows a compositional bias: basic and acidic residues; it reads LKDKFEEEIRQQKEGKGKKEKVW. Positions 32-43 are enriched in polar residues; it reads HSDSSYNKQTAV.

This is an uncharacterized protein from Dictyostelium discoideum (Social amoeba).